Consider the following 132-residue polypeptide: DNA-directed RNA polymerase subunit Rpo8 (132 aa).

It belongs to the archaeal Rpo8 RNA polymerase subunit family. As to quaternary structure, part of the 13-subunit RNA polymerase complex.

Its subcellular location is the cytoplasm. The enzyme catalyses RNA(n) + a ribonucleoside 5'-triphosphate = RNA(n+1) + diphosphate. In terms of biological role, DNA-dependent RNA polymerase (RNAP) catalyzes the transcription of DNA into RNA using the four ribonucleoside triphosphates as substrates. This is DNA-directed RNA polymerase subunit Rpo8 from Saccharolobus solfataricus (strain ATCC 35092 / DSM 1617 / JCM 11322 / P2) (Sulfolobus solfataricus).